The chain runs to 349 residues: Protein-glutamate methylesterase/protein-glutamine glutaminase (349 aa).

Residues 5–122 (RVLCVDDSAL…REGMLAYSEL (118 aa)) form the Response regulatory domain. D56 is subject to 4-aspartylphosphate. Residues 152–344 (LLSSEKLIAI…QRMLAQISSG (193 aa)) form the CheB-type methylesterase domain. Catalysis depends on residues S164, H190, and D286.

This sequence belongs to the CheB family. Phosphorylated by CheA. Phosphorylation of the N-terminal regulatory domain activates the methylesterase activity.

It is found in the cytoplasm. The enzyme catalyses [protein]-L-glutamate 5-O-methyl ester + H2O = L-glutamyl-[protein] + methanol + H(+). The catalysed reaction is L-glutaminyl-[protein] + H2O = L-glutamyl-[protein] + NH4(+). Functionally, involved in chemotaxis. Part of a chemotaxis signal transduction system that modulates chemotaxis in response to various stimuli. Catalyzes the demethylation of specific methylglutamate residues introduced into the chemoreceptors (methyl-accepting chemotaxis proteins or MCP) by CheR. Also mediates the irreversible deamidation of specific glutamine residues to glutamic acid. This Yersinia pestis bv. Antiqua (strain Antiqua) protein is Protein-glutamate methylesterase/protein-glutamine glutaminase.